The following is a 537-amino-acid chain: MATTSGPAGIAMGSVGSLLERQDFSPEELRAALAGSRGSRQPDGLLRKGLGQREFFSYLHLPKKDGKTTKRAPRNEPDYATLYYREHPRAGDFSKTSLPERGRFDKCRIRPSVFKPPVGSGKGFLSMQSLAAHKGQKLWRSNGSLHTLACHPPLSPGPRASQARAQLLHALSLDEGGPEPSLSDSSSGGSFGRSPGTGPSPFSSSLGHINHLGGSLDRAPRSPKESGPLAVLSCLPEPPPPYEFSCPTTEEVAVLPEAREELKRDLGDQDVSNSFTQVLEERQRLWLSELKRLYVERLHEVAQKAERSERNLQLQLFMAQQEQRRLRKELRAQQGLAPEPRTSGSSMEADPNARPEEEARWEVCQKTAEISLLKQQLREAQAELAQKLAEIFSLKTQLRGSRAQAQAQDAELARLREAVHSLQEQAPREEAPGSCETDDCKSRGLLGEAGGSEAREGAEQLRAELLQERLRGQEQALRFEQERQTWQEEKERVLRYQREIQGSYMDMYRRNQALEHELRLLREPPTSWSPRLESSKI.

Phosphoserine is present on S172. Disordered regions lie at residues 173–234 (LDEG…VLSC), 328–361 (KELR…EARW), and 423–458 (QEQA…REGA). Residues 178–207 (PEPSLSDSSSGGSFGRSPGTGPSPFSSSLG) show a composition bias toward low complexity. Residues 295 to 501 (VERLHEVAQK…RVLRYQREIQ (207 aa)) are a coiled coil. Basic and acidic residues predominate over residues 351–361 (PNARPEEEARW).

This sequence belongs to the N4BP3 family. As to quaternary structure, binds NEDD4. Interacts with 14-3-3 proteins. Interacts with MAVS.

The protein localises to the cytoplasmic vesicle. It localises to the cell projection. It is found in the axon. Its subcellular location is the dendrite. In terms of biological role, plays a positive role in the antiviral innate immune signaling pathway. Mechanistically, interacts with MAVS and functions as a positive regulator to promote 'Lys-63'-linked polyubiquitination of MAVS and thus strengthens the interaction between MAVS and TRAF2. Also plays a role in axon and dendrite arborization during cranial nerve development. May also be important for neural crest migration and early development of other anterior structures including eye, brain and cranial cartilage. This Mus musculus (Mouse) protein is NEDD4-binding protein 3 (N4bp3).